We begin with the raw amino-acid sequence, 346 residues long: Guanine nucleotide-binding protein subunit beta-2 (346 aa).

WD repeat units follow at residues 57 to 96 (GHINKVNSVHFAGDSRHCVTGSLDGKLIIWDTWTANKVQI), 99 to 138 (LRSAWVMTVAFSPSGNFVACGGMDNQCTVYDVNNRDASGV), 147 to 185 (GYEGFLSSCRFLDDGHLITGSGDMKICHWDLEKGVKTMD), 188 to 227 (GHAGDIAGLSLSPDMKTYITGSVDKTAKLWDVREEGHKQM), 230 to 269 (GHDMDVSSVCYHPSGFGFASCSEDQTARMYDLRADQQIAQ), 274 to 313 (QKNTGFTSCALSTSGRYLMCGGIEGNVHSWDTMKQRHTGT), and 316 to 346 (GHENRITCISLCPNGMCLASTSWDQQVRLWL).

The protein belongs to the WD repeat G protein beta family. As to quaternary structure, g proteins are composed of 3 units, alpha, beta and gamma. Interacts with Ggamma30A/Guanine nucleotide-binding protein subunit gamma-e. In terms of tissue distribution, expressed exclusively in photoreceptor cells in the compound eye (at protein level).

It is found in the cytoplasm. It localises to the cell projection. The protein resides in the axon. The protein localises to the rhabdomere. Functionally, guanine nucleotide-binding proteins (G proteins) are involved as a modulator or transducer in various transmembrane signaling systems. The beta and gamma chains are required for the GTPase activity, for replacement of GDP by GTP, and for G protein-effector interaction. In Drosophila melanogaster (Fruit fly), this protein is Guanine nucleotide-binding protein subunit beta-2 (Gbeta76C).